Reading from the N-terminus, the 204-residue chain is Holliday junction branch migration complex subunit RuvA (204 aa).

The tract at residues M1–H64 is domain I. A domain II region spans residues H65–T143. The tract at residues A144–L155 is flexible linker. Residues S156–L204 form a domain III region.

It belongs to the RuvA family. In terms of assembly, homotetramer. Forms an RuvA(8)-RuvB(12)-Holliday junction (HJ) complex. HJ DNA is sandwiched between 2 RuvA tetramers; dsDNA enters through RuvA and exits via RuvB. An RuvB hexamer assembles on each DNA strand where it exits the tetramer. Each RuvB hexamer is contacted by two RuvA subunits (via domain III) on 2 adjacent RuvB subunits; this complex drives branch migration. In the full resolvosome a probable DNA-RuvA(4)-RuvB(12)-RuvC(2) complex forms which resolves the HJ.

It is found in the cytoplasm. The RuvA-RuvB-RuvC complex processes Holliday junction (HJ) DNA during genetic recombination and DNA repair, while the RuvA-RuvB complex plays an important role in the rescue of blocked DNA replication forks via replication fork reversal (RFR). RuvA specifically binds to HJ cruciform DNA, conferring on it an open structure. The RuvB hexamer acts as an ATP-dependent pump, pulling dsDNA into and through the RuvAB complex. HJ branch migration allows RuvC to scan DNA until it finds its consensus sequence, where it cleaves and resolves the cruciform DNA. This chain is Holliday junction branch migration complex subunit RuvA, found in Hamiltonella defensa subsp. Acyrthosiphon pisum (strain 5AT).